Here is an 860-residue protein sequence, read N- to C-terminus: Leucine--tRNA ligase (860 aa).

The 'HIGH' region signature appears at 42–52 (PYPSGRLHMGH). The 'KMSKS' region signature appears at 619-623 (KMSKS). K622 provides a ligand contact to ATP.

It belongs to the class-I aminoacyl-tRNA synthetase family.

Its subcellular location is the cytoplasm. It catalyses the reaction tRNA(Leu) + L-leucine + ATP = L-leucyl-tRNA(Leu) + AMP + diphosphate. The chain is Leucine--tRNA ligase from Escherichia coli (strain ATCC 8739 / DSM 1576 / NBRC 3972 / NCIMB 8545 / WDCM 00012 / Crooks).